The sequence spans 341 residues: S-adenosylmethionine:tRNA ribosyltransferase-isomerase (341 aa).

This sequence belongs to the QueA family. In terms of assembly, monomer.

The protein resides in the cytoplasm. It catalyses the reaction 7-aminomethyl-7-carbaguanosine(34) in tRNA + S-adenosyl-L-methionine = epoxyqueuosine(34) in tRNA + adenine + L-methionine + 2 H(+). It functions in the pathway tRNA modification; tRNA-queuosine biosynthesis. Functionally, transfers and isomerizes the ribose moiety from AdoMet to the 7-aminomethyl group of 7-deazaguanine (preQ1-tRNA) to give epoxyqueuosine (oQ-tRNA). The chain is S-adenosylmethionine:tRNA ribosyltransferase-isomerase from Clostridium botulinum (strain Loch Maree / Type A3).